A 360-amino-acid chain; its full sequence is Alpha-2-macroglobulin receptor-associated protein (360 aa).

The first 33 residues, Met1–Gly33, serve as a signal peptide directing secretion. 2 positions are modified to phosphoserine: Ser53 and Ser138. Residues Ser222–Glu302 adopt a coiled-coil conformation. Positions Arg240 to Arg356 are LDL receptor binding. N-linked (GlcNAc...) asparagine glycosylation is present at Asn271. The short motif at His357–Leu360 is the Prevents secretion from ER element.

The protein belongs to the alpha-2-MRAP family. As to quaternary structure, interacts with the LRP1/alpha-2-macroglobulin receptor heavy and light chains; the interaction is transient and coincides with a reduction of ligand binding by the receptor. Interacts with LRP2/glycoprotein 330. Interacts with LRP1B; binding is followed by internalization and degradation. Interacts with LDLR. Interacts with SORL1. Interacts with LRP1; this interaction is followed by rapid internalization. N-glycosylated.

It localises to the rough endoplasmic reticulum lumen. Its subcellular location is the endoplasmic reticulum-Golgi intermediate compartment lumen. The protein localises to the golgi apparatus. It is found in the cis-Golgi network. The protein resides in the golgi apparatus lumen. It localises to the endosome lumen. Its subcellular location is the cell surface. Molecular chaperone for LDL receptor-related proteins that may regulate their ligand binding activity along the secretory pathway. In Rattus norvegicus (Rat), this protein is Alpha-2-macroglobulin receptor-associated protein (Lrpap1).